A 746-amino-acid polypeptide reads, in one-letter code: MYPWSSTGTSPFSHPDNEGAESGDMSMGEEQQQPHQRRQKFNNLRACQSCRASKVRCDQPNPGMPCLRCQKSGKPCVDAASQPGKRQRQPINSILEMESRIETILSSAELQDSAGDGETAHSTALRSPSQLSHHIQPFQHLPMGFAIPFNGGNSGTEDLNSSIRSWLNDNITDLDARTTETIFSHYLTNMVPTFPVVVFATGTTAADVRRNNPILFLAILDVASSGFCALETQRKLRKLIVQAYVHCMLRTEQYTLGLLQALIVSATWYRTIEPVEPGEQMDIYQISHTAANMALIMRLGESLNAKSWGGPMFPRREMKKGPGSAFQADSLEARRVWLGCHYICSNTSMSLRAPNIMRWTRLMDECLEVLENSPAALLSDRLLCQHIRLQHITEEFAMHLSAEEASAPAKSRAIQIQVTHRAFKRQLSEWRRTVGDGWDAHCTATSDDVPEDNAQRLTPPPPIVAIEPHAITEFMDTIDNIFRVFTSLDMSTIRALPAMYLIRIIYTFIILVKLYFAAAKLPAQDAVLQVDGLQVSRRFNRVIQMTAGWGPLWPATKLTTVFTKMRSWFESGGDNNCQRLQQAAAWLTGWELKPPSQGRDAHAMNMAEVVSDDGSIVASSSRGPASWVPSLASTDVDTLAFSHEPPLGTEFSIAPPPFRSMSCATKSCSPQAGAAEFMHDEEVPLEGQRLGDLPNIDQMDDVGMDWSQYTNMGFDLYNLDAPFLPNPPSGFDPDAAMKDNCADRNT.

Positions 1–12 are enriched in polar residues; the sequence is MYPWSSTGTSPF. The disordered stretch occupies residues 1–40; the sequence is MYPWSSTGTSPFSHPDNEGAESGDMSMGEEQQQPHQRRQK. Residues 47–76 constitute a DNA-binding region (zn(2)-C6 fungal-type); that stretch reads CQSCRASKVRCDQPNPGMPCLRCQKSGKPC. The segment at 109–131 is disordered; it reads ELQDSAGDGETAHSTALRSPSQL. Residues 120-131 are compositionally biased toward polar residues; the sequence is AHSTALRSPSQL.

The protein resides in the nucleus. Functionally, transcription factor; part of the gene cluster that mediates the biosynthesis of the diterpene ent-pimara-8(14),15-diene (PD). Acts as a positive regulator for the cluster gene. Down-regulates the expression of the penicillin gene cluster, two putative polyketide clusters, and one putative nonribosomal peptide cluster. This Emericella nidulans (strain FGSC A4 / ATCC 38163 / CBS 112.46 / NRRL 194 / M139) (Aspergillus nidulans) protein is Transcription factor pbcR.